Consider the following 43-residue polypeptide: Protein PsbN (43 aa).

A helical membrane pass occupies residues 7–29; it reads IVIFVSSLLLGITTYSVYTAFGP.

The protein belongs to the PsbN family.

Its subcellular location is the plastid. The protein localises to the chloroplast thylakoid membrane. Its function is as follows. May play a role in photosystem I and II biogenesis. In Phaeodactylum tricornutum (strain CCAP 1055/1), this protein is Protein PsbN.